The chain runs to 540 residues: Coatomer subunit delta (540 aa).

Positions 169–263 are disordered; sequence RHEEMLRGKR…GMILGGKSGT (95 aa). The span at 179 to 197 shows a compositional bias: gly residues; it reads SGGYTGISGGGGMGSGGMG. The segment covering 212–229 has biased composition (low complexity); sequence NNNNNNNNNNNNNNNNNN. Residues 238-250 are compositionally biased toward polar residues; that stretch reads SPNTSRPSAASSG. A compositionally biased stretch (gly residues) spans 251–261; it reads SQGGMILGGKS. Residues 304 to 540 enclose the MHD domain; sequence QEGVHITVEE…TLSVDTYEIK (237 aa).

Belongs to the adaptor complexes medium subunit family. Delta-COP subfamily. As to quaternary structure, oligomeric complex that consists of at least the alpha, beta, beta', gamma, delta, epsilon and zeta subunits.

The protein resides in the cytoplasm. Its subcellular location is the golgi apparatus membrane. It localises to the cytoplasmic vesicle. It is found in the COPI-coated vesicle membrane. Its function is as follows. The coatomer is a cytosolic protein complex that binds to dilysine motifs and reversibly associates with Golgi non-clathrin-coated vesicles, which further mediate biosynthetic protein transport from the ER, via the Golgi up to the trans Golgi network. Coatomer complex is required for budding from Golgi membranes, and is essential for the retrograde Golgi-to-ER transport of dilysine-tagged proteins. The sequence is that of Coatomer subunit delta (copd) from Dictyostelium discoideum (Social amoeba).